Reading from the N-terminus, the 330-residue chain is L-lactate dehydrogenase (330 aa).

NAD(+) is bound by residues Val31, Asp52, Lys57, and 96–97 (GA). Residues Gln99, Arg105, and 137–140 (NPVD) each bind substrate. NAD(+)-binding positions include 135-137 (VSN) and Ser160. Position 165–168 (165–168 (DTAR)) interacts with substrate. 2 residues coordinate beta-D-fructose 1,6-bisphosphate: Arg170 and His185. His192 functions as the Proton acceptor in the catalytic mechanism. Position 238 is a phosphotyrosine (Tyr238). Thr247 lines the substrate pocket.

The protein belongs to the LDH/MDH superfamily. LDH family. Homotetramer.

The protein localises to the cytoplasm. The catalysed reaction is (S)-lactate + NAD(+) = pyruvate + NADH + H(+). The protein operates within fermentation; pyruvate fermentation to lactate; (S)-lactate from pyruvate: step 1/1. Allosterically activated by fructose 1,6-bisphosphate (FBP). In terms of biological role, catalyzes the conversion of lactate to pyruvate. In Gloeobacter violaceus (strain ATCC 29082 / PCC 7421), this protein is L-lactate dehydrogenase.